Reading from the N-terminus, the 157-residue chain is Ubiquitin-like protein 4A (157 aa).

Positions Met1 to Lys76 constitute a Ubiquitin-like domain. A Glycyl lysine isopeptide (Lys-Gly) (interchain with G-Cter in ubiquitin) cross-link involves residue Lys48. Ser90 carries the phosphoserine modification. A required and sufficient for interaction with BAG6 region spans residues Trp96–Leu138.

As to quaternary structure, component of the BAG6/BAT3 complex, at least composed of BAG6, UBL4A and GET4/TRC35. Interacts with BAG6; the interaction is direct and required for UBL4A protein stability. Interacts with USP13; may be indirect via BAG6. Post-translationally, polyubiquitinated. Ubiquitination by AMFR and deubiquitination by USP13 may regulate the interaction between the BAG6/BAT complex and SGTA and therefore may regulate client proteins fate.

It is found in the cytoplasm. The protein localises to the cytosol. Its subcellular location is the nucleus. Functionally, as part of a cytosolic protein quality control complex, the BAG6/BAT3 complex, maintains misfolded and hydrophobic patches-containing proteins in a soluble state and participates in their proper delivery to the endoplasmic reticulum or alternatively can promote their sorting to the proteasome where they undergo degradation. The BAG6/BAT3 complex is involved in the post-translational delivery of tail-anchored/type II transmembrane proteins to the endoplasmic reticulum membrane. Recruited to ribosomes, it interacts with the transmembrane region of newly synthesized tail-anchored proteins and together with SGTA and ASNA1 mediates their delivery to the endoplasmic reticulum. Client proteins that cannot be properly delivered to the endoplasmic reticulum are ubiquitinated and sorted to the proteasome. Similarly, the BAG6/BAT3 complex also functions as a sorting platform for proteins of the secretory pathway that are mislocalized to the cytosol either delivering them to the proteasome for degradation or to the endoplasmic reticulum. The BAG6/BAT3 complex also plays a role in the endoplasmic reticulum-associated degradation (ERAD), a quality control mechanism that eliminates unwanted proteins of the endoplasmic reticulum through their retrotranslocation to the cytosol and their targeting to the proteasome. It maintains these retrotranslocated proteins in an unfolded yet soluble state condition in the cytosol to ensure their proper delivery to the proteasome. The polypeptide is Ubiquitin-like protein 4A (UBL4A) (Callithrix jacchus (White-tufted-ear marmoset)).